The following is a 100-amino-acid chain: Small ribosomal subunit protein uS14 (100 aa).

This sequence belongs to the universal ribosomal protein uS14 family. In terms of assembly, part of the 30S ribosomal subunit. Contacts proteins S3 and S10.

Functionally, binds 16S rRNA, required for the assembly of 30S particles and may also be responsible for determining the conformation of the 16S rRNA at the A site. The protein is Small ribosomal subunit protein uS14 of Thermosynechococcus vestitus (strain NIES-2133 / IAM M-273 / BP-1).